The primary structure comprises 1141 residues: Myosin-binding protein C, fast-type (1141 aa).

A disordered region spans residues 1–62; the sequence is MPEAKPAAKK…VFLKKPDSVS (62 aa). The segment covering 13-39 has biased composition (basic and acidic residues); that stretch reads KGKDAPKGAPKEAPPKEAPAEAPKEAP. Ig-like C2-type domains follow at residues 50–153, 255–344, 345–437, 438–538, and 539–638; these read PTGV…NIDV, SAAF…VKEP, PVLI…VEEK, QLEV…KQEP, and PKIH…VVDV. 2 consecutive Fibronectin type-III domains span residues 641–737 and 739–834; these read PPEA…IAPT and EPLH…IREI. The 95-residue stretch at 838-932 folds into the Ig-like C2-type 6 domain; sequence PKIRLPRHLR…ATIRIRVVEK (95 aa). One can recognise a Fibronectin type-III 3 domain in the interval 935–1030; sequence PPINVMVKEV…SKNTARILKT (96 aa). Residues 1048–1141 form the Ig-like C2-type 7 domain; sequence PKFLTPLIDR…ECKLEVRVPQ (94 aa).

It belongs to the immunoglobulin superfamily. MyBP family.

Thick filament-associated protein located in the crossbridge region of vertebrate striated muscle a bands. In vitro it binds MHC, F-actin and native thin filaments, and modifies the activity of actin-activated myosin ATPase. It may modulate muscle contraction or may play a more structural role. The polypeptide is Myosin-binding protein C, fast-type (MYBPC2) (Homo sapiens (Human)).